Here is a 373-residue protein sequence, read N- to C-terminus: Chaperone protein DnaJ (373 aa).

The region spanning Asn-4–Gly-69 is the J domain. The CR-type zinc finger occupies Gly-133–Lys-210. Residues Cys-146, Cys-149, Cys-162, Cys-165, Cys-184, Cys-187, Cys-198, and Cys-201 each coordinate Zn(2+). CXXCXGXG motif repeat units lie at residues Cys-146–Gly-153, Cys-162–Gly-169, Cys-184–Gly-191, and Cys-198–Gly-205.

The protein belongs to the DnaJ family. As to quaternary structure, homodimer. It depends on Zn(2+) as a cofactor.

The protein localises to the cytoplasm. In terms of biological role, participates actively in the response to hyperosmotic and heat shock by preventing the aggregation of stress-denatured proteins and by disaggregating proteins, also in an autonomous, DnaK-independent fashion. Unfolded proteins bind initially to DnaJ; upon interaction with the DnaJ-bound protein, DnaK hydrolyzes its bound ATP, resulting in the formation of a stable complex. GrpE releases ADP from DnaK; ATP binding to DnaK triggers the release of the substrate protein, thus completing the reaction cycle. Several rounds of ATP-dependent interactions between DnaJ, DnaK and GrpE are required for fully efficient folding. Also involved, together with DnaK and GrpE, in the DNA replication of plasmids through activation of initiation proteins. In Campylobacter lari (strain RM2100 / D67 / ATCC BAA-1060), this protein is Chaperone protein DnaJ.